The chain runs to 271 residues: Aquaporin-1 (271 aa).

Residues 1-11 (MASEFKKKLFW) lie on the Cytoplasmic side of the membrane. The chain crosses the membrane as a helical span at residues 12–29 (RAVVAEFLAMILFVFISI). The Extracellular segment spans residues 30–48 (GSALGFNYPVRNNQTAGAA). A glycan (N-linked (GlcNAc...) asparagine) is linked at Asn-42. Residues 49 to 67 (QDNVKVSLAFGLSIATLAQ) traverse the membrane as a helical segment. Topologically, residues 68–70 (SVG) are cytoplasmic. An intramembrane segment occupies 71–84 (HISGAHLNPAVTLG). The NPA 1 motif lies at 78–80 (NPA). The Cytoplasmic portion of the chain corresponds to 85–92 (LLLSCQIS). The chain crosses the membrane as a helical span at residues 93 to 111 (ILRAVMYIIAQCVGAIVAT). The Extracellular portion of the chain corresponds to 112-135 (AILSGITSSLPDNSLGRNELAPGV). Residues 136 to 155 (NSGQGLGIEIIGTLQLVLCV) traverse the membrane as a helical segment. Residues 156–165 (LATTDRRRRD) are Cytoplasmic-facing. A helical membrane pass occupies residues 166–183 (LGGSGPLAIGLSVALGHL). Topologically, residues 184 to 188 (LAIDY) are extracellular. An intramembrane segment occupies 189–201 (TGCGINPARSFGS). The NPA 2 signature appears at 194 to 196 (NPA). Residues 202–208 (SVITHNF) are Extracellular-facing. Residues 209–226 (KDHWIFWVGPFIGGALAV) traverse the membrane as a helical segment. Residues 227–271 (LIYDFILAPRSSDLTDRVKVWTSGQVEEYELDGDDINSRVEMKPK) lie on the Cytoplasmic side of the membrane. At Ser-249 the chain carries Phosphoserine. Residue Tyr-255 is modified to Phosphotyrosine. Ser-264 is subject to Phosphoserine.

It belongs to the MIP/aquaporin (TC 1.A.8) family. In terms of assembly, homotetramer; each monomer provides an independent water pore. Component of the ankyrin-1 complex in the erythrocyte, composed of ANK1, RHCE, RHAG, SLC4A1, EPB42, GYPA, GYPB and AQP1. Interacts with EPHB2; involved in endolymph production in the inner ear. Identified in a complex with STOM. Interacts (via the N-terminal) with ANK1 (via ANK 1-5 repeats). Interacts (via the C-terminal) with EPB42.

The protein localises to the cell membrane. It catalyses the reaction H2O(in) = H2O(out). It carries out the reaction nitric oxide(out) = nitric oxide(in). The catalysed reaction is CO2(out) = CO2(in). The enzyme catalyses glycerol(in) = glycerol(out). It catalyses the reaction H2O2(out) = H2O2(in). It carries out the reaction K(+)(in) = K(+)(out). The catalysed reaction is Na(+)(in) = Na(+)(out). In terms of biological role, forms a water channel that facilitates the transport of water across cell membranes, playing a crucial role in water homeostasis in various tissues. Could also be permeable to small solutes including hydrogen peroxide, glycerol and gases such as amonnia (NH3), nitric oxide (NO) and carbon dioxide (CO2). Recruited to the ankyrin-1 complex, a multiprotein complex of the erythrocyte membrane, it could be part of a CO2 metabolon, linking facilitated diffusion of CO2 across the membrane, anion exchange of Cl(-)/HCO3(-) and interconversion of dissolved CO2 and carbonic acid in the cytosol. In vitro, it shows non-selective gated cation channel activity and may be permeable to cations like K(+) and Na(+) in vivo. This is Aquaporin-1 from Canis lupus familiaris (Dog).